The following is a 1361-amino-acid chain: DNA-directed RNA polymerase subunit beta (1361 aa).

Belongs to the RNA polymerase beta chain family. In terms of assembly, the RNAP catalytic core consists of 2 alpha, 1 beta, 1 beta' and 1 omega subunit. When a sigma factor is associated with the core the holoenzyme is formed, which can initiate transcription.

The enzyme catalyses RNA(n) + a ribonucleoside 5'-triphosphate = RNA(n+1) + diphosphate. In terms of biological role, DNA-dependent RNA polymerase catalyzes the transcription of DNA into RNA using the four ribonucleoside triphosphates as substrates. This Saccharophagus degradans (strain 2-40 / ATCC 43961 / DSM 17024) protein is DNA-directed RNA polymerase subunit beta.